Here is a 666-residue protein sequence, read N- to C-terminus: ATP-dependent RNA helicase DDX51 (666 aa).

Alanine 2 carries the post-translational modification N-acetylalanine. The tract at residues 9 to 152 (YPGPDAAAAA…AAPDGPALEE (144 aa)) is disordered. Residues 10–28 (PGPDAAAAAGPEGAEAGAH) show a composition bias toward low complexity. Residues 33–48 (ALLERLQSRARERQQQ) show a composition bias toward basic and acidic residues. Over residues 49–58 (REPAQTEAAA) the composition is skewed to low complexity. A compositionally biased stretch (basic residues) spans 65–75 (RRRRRPRRRRR). Phosphoserine occurs at positions 83 and 103. Acidic residues predominate over residues 97-108 (EDAGAESNEEAP). Residues 221–229 (YFPVQAAVI) carry the Q motif motif. In terms of domain architecture, Helicase ATP-binding spans 243–452 (GRGGYRPSDL…QLGLHQPRLF (210 aa)). Position 256–263 (256–263 (APTGSGKT)) interacts with ATP. The DEAD box signature appears at 371 to 374 (DEAD). The 147-residue stretch at 494–640 (VVLHLVLEMG…RHELSSKLLQ (147 aa)) folds into the Helicase C-terminal domain.

It belongs to the DEAD box helicase family. DDX51/DBP6 subfamily.

It is found in the nucleus. It localises to the nucleolus. It carries out the reaction ATP + H2O = ADP + phosphate + H(+). Functionally, ATP-binding RNA helicase involved in the biogenesis of 60S ribosomal subunits. This chain is ATP-dependent RNA helicase DDX51 (DDX51), found in Homo sapiens (Human).